Reading from the N-terminus, the 622-residue chain is uncharacterized protein (622 aa).

Residues 157-166 (LKESPLRDQQ) are compositionally biased toward basic and acidic residues. The segment at 157–238 (LKESPLRDQQ…GLPDHNSISE (82 aa)) is disordered.

This is an uncharacterized protein from Homo sapiens (Human).